Reading from the N-terminus, the 2764-residue chain is Teneurin-2 (2764 aa).

The Teneurin N-terminal domain occupies 1 to 375 (MDVKDRRHRS…KPSKYCSWKC (375 aa)). Residues 1 to 379 (MDVKDRRHRS…YCSWKCAALS (379 aa)) lie on the Cytoplasmic side of the membrane. 2 positions are modified to phosphoserine: Ser-90 and Ser-124. The segment at 111 to 271 (TGSDADSDTE…HHHSSANSLN (161 aa)) is disordered. Residues 141 to 155 (SSGLSSRENSALTLT) are compositionally biased toward polar residues. A Phosphothreonine modification is found at Thr-155. Ser-157 carries the post-translational modification Phosphoserine. The span at 159–168 (NENKSDDDNG) shows a compositional bias: basic and acidic residues. Over residues 174–188 (TSSSSLLPSAQLPSS) the composition is skewed to low complexity. Residues 202–211 (DSNTSHQIMD) show a composition bias toward polar residues. A compositionally biased stretch (low complexity) spans 229–240 (SGPQQASSSGPP). Residues 380 to 400 (AIAAALLLAILLAYFIAMHLL) form a helical membrane-spanning segment. Topologically, residues 401-2764 (GLNWQLQPAD…FLRQNEMGKR (2364 aa)) are extracellular. N-linked (GlcNAc...) asparagine glycans are attached at residues Asn-443 and Asn-482. 8 EGF-like domains span residues 575-603 (DCPRNCHGNGECVSGLCHCFPGFLGADCA), 598-634 (LGADCAKAACPVLCSGNGQYSKGTCQCYSGWKGAECD), 636-668 (PMNQCIDPSCGGHGSCIDGNCVCAAGYKGEHCE), 669-701 (EVDCLDPTCSSHGVCVNGECLCSPGWGGLNCEL), 702-735 (ARVQCPDQCSGHGTYLPDSGLCSCDPNWMGPDCS), 737-765 (VCSVDCGTHGVCIGGACRCEEGWTGAACD), 768-796 (VCHPRCIEHGTCKDGKCECREGWNGEHCT), and 798-831 (DGCPDLCNGNGRCTLGQNSWQCVCQTGWRGPGCN). Intrachain disulfides connect Cys-576/Cys-586, Cys-580/Cys-591, Cys-593/Cys-602, Cys-611/Cys-622, Cys-624/Cys-633, Cys-640/Cys-651, Cys-645/Cys-656, Cys-658/Cys-667, Cys-672/Cys-683, Cys-677/Cys-688, Cys-690/Cys-699, Cys-710/Cys-723, Cys-725/Cys-734, Cys-738/Cys-748, Cys-742/Cys-753, Cys-755/Cys-764, Cys-769/Cys-779, Cys-773/Cys-784, Cys-786/Cys-795, Cys-800/Cys-810, Cys-804/Cys-819, and Cys-821/Cys-830. Residues Asn-915, Asn-938, and Asn-1257 are each glycosylated (N-linked (GlcNAc...) asparagine). NHL repeat units follow at residues 1262-1306 (LELR…VKSL), 1332-1376 (ARCG…NGII), 1391-1442 (LSCD…IAGR), 1464-1491 (LESASAIAISHTGVLYITETDEKKINRL), and 1520-1563 (CYSG…VSKN). Residues 1573–1592 (YEAASPGEQELYVFNADGIH) form a YD 1 repeat. The N-linked (GlcNAc...) asparagine glycan is linked to Asn-1606. YD repeat units lie at residues 1609 to 1629 (YSADNDVTELIDNNGNSLKIR), 1672 to 1691 (YDGNTGLLATKSDETGWTTF), and 1692 to 1714 (YDYDHEGRLTNVTRPTGVVTSLH). Asn-1702, Asn-1739, Asn-1763, Asn-1797, and Asn-1882 each carry an N-linked (GlcNAc...) asparagine glycan. YD repeat units follow at residues 1885–1904 (YFFNGRLAGLQRGAMSERTD), 1926–1944 (YLDKSMVLLLQSQRQYIFE), 1945–1965 (YDSSDRLHAVTMPSVARHSMS), 1972–1989 (YIRNIYNPPESNASVIFD), 1990–2011 (YSDDGRILKTSFLGTGRQVFYK), 2012–2029 (YGKLSKLSEIVYDSTAVT), 2032–2052 (YDETTGVLKMVNLQSGGFSCT), 2055–2075 (YRKVGPLVDKQIYRFSEEGMI), 2083–2103 (YHDNSFRIASIKPVISETPLP), 2109–2126 (YDEISGKVEHFGKFGVIY), 2127–2153 (YDINQIITTAVMTLSKHFDTHGRIKEV), 2155–2168 (YEMFRSLMYWMTVQ), 2169–2192 (YDSMGRVIKRELKLGPYANTTKYT), 2195–2215 (YDGDGQLQSVAVNDRPTWRYS), 2216–2236 (YDLNGNLHLLNPGNSARLMPL), 2238–2258 (YDLRDRITRLGDVQYKIDDDG), 2270–2290 (YNSKGLLTRAYNKASGWSVQY), and 2292–2312 (YDGVGRRASYKTNLGHHLQYF). Asn-1983 carries N-linked (GlcNAc...) asparagine glycosylation. Asn-2187 carries N-linked (GlcNAc...) asparagine glycosylation. Residue Asn-2327 is glycosylated (N-linked (GlcNAc...) asparagine). One copy of the YD 23 repeat lies at 2338–2379 (YDLQGHLFAMESSSGEEYYVASDNTGTPLAVYSINGLMIKQL). A glycan (N-linked (GlcNAc...) asparagine) is linked at Asn-2638.

It belongs to the tenascin family. Teneurin subfamily. Homodimer; disulfide-linked. Heterodimer with either TENM1 or TENM3. May also form heterodimer with TENM4. In terms of processing, derives from the membrane form by proteolytic processing. Post-translationally, derives from the plasma membrane form by proteolytic cleavage and translocates to the nucleus. Homophilic binding of the C-terminal extracellular domain stimulates its proteolytic cleavage and release in the cytoplasmic. Is subjected to rapid degradation by the proteasome pathway. In terms of tissue distribution, expressed in the cortex, CA1, CA2, CA3, dentate gyrus and granular layer of the hippocampus. Expressed in the Purkinje cells and molecular layer of the cerebellum.

Its subcellular location is the cell membrane. The protein resides in the presynaptic cell membrane. It localises to the postsynaptic cell membrane. It is found in the endoplasmic reticulum. The protein localises to the golgi apparatus. Its subcellular location is the synapse. The protein resides in the cell projection. It localises to the dendritic spine. It is found in the filopodium. The protein localises to the growth cone. Its subcellular location is the nucleus. The protein resides in the PML body. Its function is as follows. Involved in neural development, regulating the establishment of proper connectivity within the nervous system. Acts as a ligand of the ADGRL1 and ADGRL3 receptors that are expressed at the surface of adjacent cells. Promotes the formation of filopodia and enlarged growth cone in neuronal cells. Mediates axon guidance and homophilic and heterophilic cell-cell adhesion. May function as a cellular signal transducer. In terms of biological role, induces gene transcription inhibition. The chain is Teneurin-2 (Tenm2) from Mus musculus (Mouse).